The primary structure comprises 407 residues: Ran GTPase-activating protein 1 (407 aa).

11 LRR repeats span residues 11–39, 40–67, 68–101, 102–133, 134–166, 167–197, 198–226, 227–256, 257–285, 286–315, and 316–346; these read EEEQ…EELA, ALKT…KCIA, ENTQ…KFLL, PVLL…DYIA, HAVN…LAQN, KKAA…ALGL, KSHS…IHYG, LQYL…KALP, TWKD…KVFT, EVKF…LPAM, and EKGN…LQSK. The interval 353–378 is disordered; it reads DDFEEVDSEDEEGEDEEDEDEDEKLE. Ser-360 bears the Phosphoserine mark.

This sequence belongs to the RNA1 family.

The protein localises to the cytoplasm. GTPase activator for the nuclear Ras-related regulatory protein GSP1 (Ran), converting it to the putatively inactive GDP-bound state. This Saccharomyces cerevisiae (strain ATCC 204508 / S288c) (Baker's yeast) protein is Ran GTPase-activating protein 1 (RNA1).